We begin with the raw amino-acid sequence, 311 residues long: Aspartate carbamoyltransferase catalytic subunit (311 aa).

Residues R55 and T56 each coordinate carbamoyl phosphate. An L-aspartate-binding site is contributed by K85. 3 residues coordinate carbamoyl phosphate: R106, H135, and Q138. The L-aspartate site is built by R168 and R230. The carbamoyl phosphate site is built by L268 and P269.

This sequence belongs to the aspartate/ornithine carbamoyltransferase superfamily. ATCase family. In terms of assembly, heterododecamer (2C3:3R2) of six catalytic PyrB chains organized as two trimers (C3), and six regulatory PyrI chains organized as three dimers (R2).

The catalysed reaction is carbamoyl phosphate + L-aspartate = N-carbamoyl-L-aspartate + phosphate + H(+). It participates in pyrimidine metabolism; UMP biosynthesis via de novo pathway; (S)-dihydroorotate from bicarbonate: step 2/3. Catalyzes the condensation of carbamoyl phosphate and aspartate to form carbamoyl aspartate and inorganic phosphate, the committed step in the de novo pyrimidine nucleotide biosynthesis pathway. The sequence is that of Aspartate carbamoyltransferase catalytic subunit from Citrobacter koseri (strain ATCC BAA-895 / CDC 4225-83 / SGSC4696).